Here is a 293-residue protein sequence, read N- to C-terminus: Protease HtpX homolog (293 aa).

2 helical membrane passes run 7–26 (ASLL…ALLG) and 30–49 (GMVM…WYYS). Residue histidine 131 coordinates Zn(2+). Glutamate 132 is an active-site residue. Histidine 135 contributes to the Zn(2+) binding site. Transmembrane regions (helical) follow at residues 148–168 (ATLA…FWFF) and 180–200 (IGAL…QLGI). Glutamate 205 contributes to the Zn(2+) binding site.

This sequence belongs to the peptidase M48B family. The cofactor is Zn(2+).

The protein resides in the cell inner membrane. In Acaryochloris marina (strain MBIC 11017), this protein is Protease HtpX homolog.